The chain runs to 183 residues: Thioredoxin/glutathione peroxidase BtuE (183 aa).

Cys37 is an active-site residue.

The protein belongs to the glutathione peroxidase family. BtuE subfamily.

It is found in the periplasm. It catalyses the reaction 2 glutathione + H2O2 = glutathione disulfide + 2 H2O. It carries out the reaction a hydroperoxide + [thioredoxin]-dithiol = an alcohol + [thioredoxin]-disulfide + H2O. In terms of biological role, non-specific peroxidase that can use thioredoxin or glutathione as a reducing agent. In vitro, utilizes preferentially thioredoxin A to decompose hydrogen peroxide as well as cumene-, tert-butyl-, and linoleic acid hydroperoxides, suggesting that it may have one or more organic hydroperoxide as its physiological substrate. This chain is Thioredoxin/glutathione peroxidase BtuE, found in Escherichia coli (strain K12).